The primary structure comprises 643 residues: Macrolide export ATP-binding/permease protein MacB (643 aa).

The ABC transporter domain maps to 4–242 (IEIKELNRYF…VNNQSKAKSR (239 aa)). ATP is bound at residue 40-47 (GQSGSGKS). The next 4 helical transmembrane spans lie at 269–289 (LLTM…VALG), 523–543 (IAFI…LVSV), 572–592 (ILIC…IGGI), and 603–623 (VFST…GVIF).

This sequence belongs to the ABC transporter superfamily. Macrolide exporter (TC 3.A.1.122) family. In terms of assembly, homodimer. Part of the tripartite efflux system MacAB-TolC, which is composed of an inner membrane transporter, MacB, a periplasmic membrane fusion protein, MacA, and an outer membrane component, TolC. The complex forms a large protein conduit and can translocate molecules across both the inner and outer membranes. Interacts with MacA.

The protein localises to the cell inner membrane. In terms of biological role, part of the tripartite efflux system MacAB-TolC. MacB is a non-canonical ABC transporter that contains transmembrane domains (TMD), which form a pore in the inner membrane, and an ATP-binding domain (NBD), which is responsible for energy generation. Confers resistance against macrolides. The protein is Macrolide export ATP-binding/permease protein MacB of Mannheimia succiniciproducens (strain KCTC 0769BP / MBEL55E).